A 111-amino-acid chain; its full sequence is 2Fe-2S ferredoxin (111 aa).

One can recognise a 2Fe-2S ferredoxin-type domain in the interval 5-107 (IKVTFVINNG…GIKVRLPSAT (103 aa)). Residues Cys-42, Cys-48, Cys-51, and Cys-88 each coordinate [2Fe-2S] cluster.

The protein belongs to the adrenodoxin/putidaredoxin family. It depends on [2Fe-2S] cluster as a cofactor.

Its function is as follows. Ferredoxin are iron-sulfur proteins that transfer electrons in a wide variety of metabolic reactions. This Rickettsia bellii (strain RML369-C) protein is 2Fe-2S ferredoxin (fdxB).